Reading from the N-terminus, the 513-residue chain is Membrane-bound transcription factor site-2 protease homolog (513 aa).

The Cytoplasmic segment spans residues 1–60; the sequence is MEISGRRMRRFRMRFRRDHLTGGENIENEASCCYCDLKISNFNEPIFRLGRRFSGVLKVW. The helical transmembrane segment at 61–81 threads the bilayer; sequence FSIGLGFGVASLILVTVFLLL. Over 82–107 the chain is Lumenal; the sequence is QFHSNPLFSNRLTSAVFGFSPSTRVS. Residues 108 to 128 traverse the membrane as a helical segment; sequence LSGIAYVLVSTVITVSVHELG. Residue histidine 125 coordinates Zn(2+). Residue glutamate 126 is part of the active site. Position 129 (histidine 129) interacts with Zn(2+). The Cytoplasmic portion of the chain corresponds to 129–137; sequence HALAAASEG. The chain crosses the membrane as a helical span at residues 138-158; the sequence is IQMEYIAVFIAAIFPGGLVAF. At 159 to 182 the chain is on the lumenal side; the sequence is DNDVLQSLPSFNALRIYCAGIWHN. A helical transmembrane segment spans residues 183-203; sequence AVFCALCVFALFLLPVMLSPF. Residues 204-437 lie on the Cytoplasmic side of the membrane; that stretch reads YKHGESLTVV…KSFPNILERS (234 aa). The helical transmembrane segment at 438 to 458 threads the bilayer; that stretch reads LTCTFHVSLALVLLNSLPVYY. Residues 459 to 485 are Lumenal-facing; it reads LDGESILESSLQSFTWLSPRKKKKALQ. The chain crosses the membrane as a helical span at residues 486–506; sequence VCLVGGSLLSFLAFFRIFLLG. Over 507-513 the chain is Cytoplasmic; it reads LPLSRRW.

The protein belongs to the peptidase M50A family. It depends on Zn(2+) as a cofactor. In terms of tissue distribution, expressed in the vasculature of roots, cotyledons and leaves.

It localises to the golgi apparatus membrane. Metalloprotease that catalyzes the second step (site-2 cleavage) in the proteolytic activation of various factors, after site-1 cleavage. Part of a regulated intramembrane proteolysis (RIP) cascade. After ER stress, cleaves BZIP17 and BZIP28 proteins which function as stress sensors and transducers in ER stress signaling pathway. The N-terminal bZIP component is translocated to the nucleus, where it activates the expression and production of ER chaperones, as well as proteins involved in brassinosteroid (BR) signaling, which is required for stress acclimation and growth. The sequence is that of Membrane-bound transcription factor site-2 protease homolog (S2P) from Arabidopsis thaliana (Mouse-ear cress).